Here is a 237-residue protein sequence, read N- to C-terminus: MAKIIISLILLLSLFSFSYGAYNCNKLNCSSKNTKCRTFSCTSVVGCYYTDKCTSPDLCHNSACNASTGNCTLTTISCNDNNPCTDDFCHPGYGCYSVPNSCDPGVICQQNCNDNDPCTYDFCDALNICRHSETYCNDGDACTLNTCGVNGCNFTKISCDDNDPCTADYCSTLYGCYHEPIECSIKVPCNIDSDCNRNNGCETFTCNLSTNTCDYYAKNCGGWPCINNQCTTGSISN.

A signal peptide spans 1–20 (MAKIIISLILLLSLFSFSYG). N28, N65, and N70 each carry an N-linked (GlcNAc...) asparagine glycan. Cys-rich CT repeat units follow at residues 57 to 81 (DLCH…CNDN), 82 to 105 (NPCT…CDPG), 116 to 139 (DPCT…CNDG), 140 to 162 (DACT…CDDN), and 163 to 186 (DPCT…CSIK). N153 is a glycosylation site (N-linked (GlcNAc...) asparagine). A glycan (N-linked (GlcNAc...) asparagine) is linked at N207.

PDI acts by binding stoichiometrically to cyclic nucleotide phosphodiesterase, changing the KM of the enzyme for cAMP from 10 uM to 2 mM. The sequence is that of Cyclic nucleotide phosphodiesterase inhibitor (pdiA) from Dictyostelium discoideum (Social amoeba).